We begin with the raw amino-acid sequence, 6269 residues long: Nonribosomal peptide synthetase 1 (6269 aa).

Positions 249–781 are adenylation 1; sequence ENDWSRVCSF…VSGKLDRKSI (533 aa). Residues 803–879 form the Carrier 1 domain; it reads RAANSTEDQL…ELATRVKGVT (77 aa). Ser-840 carries the O-(pantetheine 4'-phosphoryl)serine modification. Residues 894-1342 form an epimerase 1 region; sequence LSPIQKLHFM…TLSDFPMLSL (449 aa). Residues 1373 to 1775 form a condensation 1 region; the sequence is SRMQQGILLS…FLQSLENIIH (403 aa). Residues 1725–2333 form an adenylation 2 region; the sequence is HDPAEFPVYV…TGLLDRWFLR (609 aa). Residues 2364–2386 are disordered; the sequence is KPSPSQLLPSSTSATHRSSGTST. Residues 2367–2376 show a composition bias toward low complexity; the sequence is PSQLLPSSTS. Polar residues predominate over residues 2377–2386; it reads ATHRSSGTST. The interval 2597–2670 is condensation 2; the sequence is WRKYLADVES…TGSEEVCYGY (74 aa). Residues 2845 to 3368 form an adenylation 3 region; sequence RCAHEIIEQQ…SGKLDRKKLR (524 aa). Positions 3392 to 3468 constitute a Carrier 2 domain; it reads ASDEGVEGTL…NMAKRCGMLQ (77 aa). An O-(pantetheine 4'-phosphoryl)serine modification is found at Ser-3429. The interval 3512–3898 is condensation 3; the sequence is CSPVQEGLLT…GQFSFVLEQL (387 aa). The tract at residues 3919–4454 is adenylation 4; sequence DSKEVALWNK…VSGKLDRKKI (536 aa). In terms of domain architecture, Carrier 3 spans 4487–4563; the sequence is EDKSTAAKIL…ELIQAAEVET (77 aa). Ser-4524 is modified (O-(pantetheine 4'-phosphoryl)serine). An epimerase 2 region spans residues 4578-5024; it reads LSPIQNLYFK…DFPLLPITYD (447 aa). The interval 5052-5466 is condensation 4; sequence SSVQEGILLS…PSQLVSELDL (415 aa). The 77-residue stretch at 5552–5628 folds into the Carrier 4 domain; sequence SKLMEPEKRL…DMLAAISASN (77 aa). Ser-5589 carries the post-translational modification O-(pantetheine 4'-phosphoryl)serine. Residues 5628–5658 are disordered; the sequence is NSSSALEPDSPADSNNEKPAEPPRLVELERN. Residues 5642–5657 are compositionally biased toward basic and acidic residues; sequence NNEKPAEPPRLVELER. Residues 5720–6067 form a condensation 5 region; sequence FFFDGRGSLD…SSSDGKLGVS (348 aa). Positions 6139–6220 constitute a Carrier 5 domain; sequence SDILVHSDVV…GQMAVLTLHN (82 aa).

It belongs to the NRP synthetase family. Post-translationally, the thiolation domains are 4'-phosphopantetheinylated.

In terms of biological role, nonribosomal peptide synthesis (NRPS) is a key mechanism responsible for the biosynthesis of bioactive metabolites which are potentially contributing to organismal virulence. Contributes to improved fungal tolerance against oxidative stress, during the infection process. The protein is Nonribosomal peptide synthetase 1 (NRPS1) of Aspergillus fumigatus (strain ATCC MYA-4609 / CBS 101355 / FGSC A1100 / Af293) (Neosartorya fumigata).